The sequence spans 63 residues: Large ribosomal subunit protein eL37 (63 aa).

Residues Cys20, Cys23, Cys35, and Cys38 each contribute to the Zn(2+) site. The segment at Cys20 to Cys38 adopts a C4-type zinc-finger fold.

The protein belongs to the eukaryotic ribosomal protein eL37 family. Zn(2+) serves as cofactor.

In terms of biological role, binds to the 23S rRNA. In Ignicoccus hospitalis (strain KIN4/I / DSM 18386 / JCM 14125), this protein is Large ribosomal subunit protein eL37.